The chain runs to 270 residues: tRNA pseudouridine synthase A (270 aa).

Aspartate 60 functions as the Nucleophile in the catalytic mechanism. Tyrosine 118 serves as a coordination point for substrate.

Belongs to the tRNA pseudouridine synthase TruA family. As to quaternary structure, homodimer.

It catalyses the reaction uridine(38/39/40) in tRNA = pseudouridine(38/39/40) in tRNA. Functionally, formation of pseudouridine at positions 38, 39 and 40 in the anticodon stem and loop of transfer RNAs. This Salmonella agona (strain SL483) protein is tRNA pseudouridine synthase A.